Consider the following 468-residue polypeptide: Tubulin gamma chain (468 aa).

142 to 148 provides a ligand contact to GTP; the sequence is AGGTGSG.

Belongs to the tubulin family.

It localises to the cytoplasm. It is found in the cytoskeleton. Its subcellular location is the microtubule organizing center. Tubulin is the major constituent of microtubules. The gamma chain is found at microtubule organizing centers (MTOC) such as the spindle poles, suggesting that it is involved in the minus-end nucleation of microtubule assembly. In Chlamydomonas reinhardtii (Chlamydomonas smithii), this protein is Tubulin gamma chain (TUBG).